A 284-amino-acid polypeptide reads, in one-letter code: 4-hydroxybenzoate octaprenyltransferase (284 aa).

8 consecutive transmembrane segments (helical) span residues 16–36 (PIGI…ASDG), 40–60 (WTLL…GCAI), 91–111 (LLVA…LNTL), 132–152 (FFAI…PMGF), 157–177 (NTVP…AVAY), 206–226 (VAAV…VGWQ), 231–251 (TWFA…YTLI), and 259–279 (CFAA…GVVL).

It belongs to the UbiA prenyltransferase family. It depends on Mg(2+) as a cofactor.

It localises to the cell inner membrane. It carries out the reaction all-trans-octaprenyl diphosphate + 4-hydroxybenzoate = 4-hydroxy-3-(all-trans-octaprenyl)benzoate + diphosphate. It functions in the pathway cofactor biosynthesis; ubiquinone biosynthesis. Functionally, catalyzes the prenylation of para-hydroxybenzoate (PHB) with an all-trans polyprenyl group. Mediates the second step in the final reaction sequence of ubiquinone-8 (UQ-8) biosynthesis, which is the condensation of the polyisoprenoid side chain with PHB, generating the first membrane-bound Q intermediate 3-octaprenyl-4-hydroxybenzoate. The polypeptide is 4-hydroxybenzoate octaprenyltransferase (Herminiimonas arsenicoxydans).